The sequence spans 554 residues: Glutamine--tRNA ligase (554 aa).

Residues 34-44 carry the 'HIGH' region motif; that stretch reads PEPNGYLHIGH. ATP is bound by residues 35-37 and 41-47; these read EPN and HIGHAKS. Positions 67 and 212 each coordinate L-glutamine. ATP-binding positions include Thr231, 261–262, and 269–271; these read RL and MSK. The 'KMSKS' region signature appears at 268–272; sequence VMSKR. The interval 317–324 is interaction with tRNA; it reads TKQDNTIE.

The protein belongs to the class-I aminoacyl-tRNA synthetase family. Monomer.

The protein localises to the cytoplasm. It catalyses the reaction tRNA(Gln) + L-glutamine + ATP = L-glutaminyl-tRNA(Gln) + AMP + diphosphate. The protein is Glutamine--tRNA ligase of Shigella dysenteriae serotype 1 (strain Sd197).